The primary structure comprises 565 residues: Putative pentatricopeptide repeat-containing protein At3g05240 (565 aa).

13 PPR repeats span residues 37 to 70 (NVIP…IDCP), 71 to 105 (SVYI…GYSP), 106 to 140 (DYFT…GFEV), 141 to 171 (NMYV…IPQW), 172 to 206 (NVVA…GVKA), 207 to 241 (NETI…GFDP), 250 to 280 (NVIL…MPER), 281 to 315 (TLVS…GIAP), 316 to 350 (DKVT…GFVK), 351 to 381 (DAAI…LEKK), 382 to 416 (DTIA…GNAT), 418 to 448 (DGIT…MRDL), and 454 to 484 (TVEH…MPVK). The segment at 489-564 (IWGALLNGCD…VLGHSSVETM (76 aa)) is type E motif.

It belongs to the PPR family. PCMP-E subfamily.

The sequence is that of Putative pentatricopeptide repeat-containing protein At3g05240 (PCMP-E82) from Arabidopsis thaliana (Mouse-ear cress).